We begin with the raw amino-acid sequence, 397 residues long: MSESVHTNTSLWSKGMKAVIVAQFLSAFGDNALLFATLALLKAQFYPEWSQPILQMVFVGAYILFAPFVGQVADSFAKGRVMMFANGLKLLGAASICFGINPFLGYTLVGVGAAAYSPAKYGILGELTTGSKLVKANGLMEASTIAAILLGSVAGGVLADWHVLVALAACALAYGGAVVANIYIPKLAAARPGQSWNLINMTRSFLNACTSLWCNGETRFSLVGTSLFWGAGVTLRFLLVLWVPVALGITDNATPTYLNAMVAIGIVVGAGAAAKLVTLETVSRCMPAGILIGVVVLIFSLQHELLPAYALLMLIGVLGGFFVVPLNALLQERGKKSVGAGNAIAVQNLGENSAMLLMLGIYSLAVMVGIPVVPIGIGFGALFALAITALWIWQRRH.

Residues 1–17 lie on the Periplasmic side of the membrane; sequence MSESVHTNTSLWSKGMK. The chain crosses the membrane as a helical span at residues 18 to 38; sequence AVIVAQFLSAFGDNALLFATL. Residues 39 to 52 lie on the Cytoplasmic side of the membrane; sequence ALLKAQFYPEWSQP. The helical transmembrane segment at 53–73 threads the bilayer; sequence ILQMVFVGAYILFAPFVGQVA. Residues 74–90 are Periplasmic-facing; sequence DSFAKGRVMMFANGLKL. Residues 91–111 traverse the membrane as a helical segment; it reads LGAASICFGINPFLGYTLVGV. Topologically, residues 112–144 are cytoplasmic; it reads GAAAYSPAKYGILGELTTGSKLVKANGLMEAST. Residues 145–165 traverse the membrane as a helical segment; sequence IAAILLGSVAGGVLADWHVLV. Position 166 (alanine 166) is a topological domain, periplasmic. The helical transmembrane segment at 167–187 threads the bilayer; that stretch reads LAACALAYGGAVVANIYIPKL. Residues 188 to 226 are Cytoplasmic-facing; sequence AAARPGQSWNLINMTRSFLNACTSLWCNGETRFSLVGTS. Residues 227-247 traverse the membrane as a helical segment; sequence LFWGAGVTLRFLLVLWVPVAL. At 248 to 256 the chain is on the periplasmic side; that stretch reads GITDNATPT. Residues 257 to 277 traverse the membrane as a helical segment; sequence YLNAMVAIGIVVGAGAAAKLV. The Cytoplasmic portion of the chain corresponds to 278–280; it reads TLE. The helical transmembrane segment at 281–301 threads the bilayer; the sequence is TVSRCMPAGILIGVVVLIFSL. Residues 302–304 lie on the Periplasmic side of the membrane; that stretch reads QHE. The chain crosses the membrane as a helical span at residues 305–325; that stretch reads LLPAYALLMLIGVLGGFFVVP. Topologically, residues 326-343 are cytoplasmic; that stretch reads LNALLQERGKKSVGAGNA. The helical transmembrane segment at 344–364 threads the bilayer; the sequence is IAVQNLGENSAMLLMLGIYSL. At 365 to 366 the chain is on the periplasmic side; the sequence is AV. A helical membrane pass occupies residues 367–387; sequence MVGIPVVPIGIGFGALFALAI. Topologically, residues 388–397 are cytoplasmic; the sequence is TALWIWQRRH.

This sequence belongs to the major facilitator superfamily. LplT (TC 2.A.1.42) family.

The protein localises to the cell inner membrane. Its function is as follows. Catalyzes the facilitated diffusion of 2-acyl-glycero-3-phosphoethanolamine (2-acyl-GPE) into the cell. The chain is Lysophospholipid transporter LplT from Shigella dysenteriae serotype 1 (strain Sd197).